The following is a 227-amino-acid chain: 2,3-bisphosphoglycerate-dependent phosphoglycerate mutase (227 aa).

Residues 7-14 (RHGFSEWN), 20-21 (TG), Arg59, 86-89 (ERHY), Lys97, 113-114 (RR), and 182-183 (GN) contribute to the substrate site. His8 serves as the catalytic Tele-phosphohistidine intermediate. Glu86 acts as the Proton donor/acceptor in catalysis.

The protein belongs to the phosphoglycerate mutase family. BPG-dependent PGAM subfamily. As to quaternary structure, homodimer.

The catalysed reaction is (2R)-2-phosphoglycerate = (2R)-3-phosphoglycerate. The protein operates within carbohydrate degradation; glycolysis; pyruvate from D-glyceraldehyde 3-phosphate: step 3/5. Catalyzes the interconversion of 2-phosphoglycerate and 3-phosphoglycerate. In Pasteurella multocida (strain Pm70), this protein is 2,3-bisphosphoglycerate-dependent phosphoglycerate mutase.